The sequence spans 456 residues: Imidazolonepropionase (456 aa).

Fe(3+) contacts are provided by histidine 104 and histidine 106. Residues histidine 104 and histidine 106 each contribute to the Zn(2+) site. Positions 113, 176, and 209 each coordinate 4-imidazolone-5-propanoate. N-formimidoyl-L-glutamate is bound at residue tyrosine 176. Histidine 274 lines the Fe(3+) pocket. Zn(2+) is bound at residue histidine 274. Glutamine 277 is a binding site for 4-imidazolone-5-propanoate. Aspartate 349 contributes to the Fe(3+) binding site. Aspartate 349 contributes to the Zn(2+) binding site. Positions 351 and 353 each coordinate N-formimidoyl-L-glutamate. A 4-imidazolone-5-propanoate-binding site is contributed by serine 354.

This sequence belongs to the metallo-dependent hydrolases superfamily. HutI family. Requires Zn(2+) as cofactor. It depends on Fe(3+) as a cofactor.

The protein localises to the cytoplasm. The catalysed reaction is 4-imidazolone-5-propanoate + H2O = N-formimidoyl-L-glutamate. It functions in the pathway amino-acid degradation; L-histidine degradation into L-glutamate; N-formimidoyl-L-glutamate from L-histidine: step 3/3. In terms of biological role, catalyzes the hydrolytic cleavage of the carbon-nitrogen bond in imidazolone-5-propanoate to yield N-formimidoyl-L-glutamate. It is the third step in the universal histidine degradation pathway. This chain is Imidazolonepropionase, found in Verminephrobacter eiseniae (strain EF01-2).